The chain runs to 353 residues: Suppressor of RNA-mediated gene silencing (353 aa).

It belongs to the phytoreovirus non-structural protein 10 family.

In terms of biological role, suppressor of RNA-mediated gene silencing, also known as post-transcriptional gene silencing (PTGS), a mechanism of plant viral defense that limits the accumulation of viral RNAs. This Alopecurus aequalis (Barnyard grass) protein is Suppressor of RNA-mediated gene silencing.